Consider the following 475-residue polypeptide: U3 small nucleolar RNA-interacting protein 2 (475 aa).

Residues 1–75 (MSATAAARKR…EEEEELEETA (75 aa)) form a disordered region. A Nuclear localization signal motif is present at residues 8–40 (RKRGKPASGAGAGAGAGKRRRKADSAGDRGKSK). At arginine 10 the chain carries Omega-N-methylarginine. Lysine 12 and lysine 25 each carry N6-acetyllysine. Residues serine 50, serine 51, serine 53, and serine 57 each carry the phosphoserine modification. The span at 65–74 (EEEEEELEET) shows a compositional bias: acidic residues. Residue lysine 113 forms a Glycyl lysine isopeptide (Lys-Gly) (interchain with G-Cter in SUMO2) linkage. WD repeat units follow at residues 144 to 183 (GHQL…KLHV), 197 to 236 (GHSS…HLYT), 239 to 278 (GHRD…YVET), 281 to 320 (GHQD…QLVF), 322 to 360 (GHQG…PLAL), 374 to 413 (EQPF…RQLD), and 419 to 460 (PLVG…NSVC).

It belongs to the WD repeat RRP9 family. As to quaternary structure, interacts specifically with the U3 small nucleolar RNA (U3 snoRNA). Binds a sub-fragment of the U3 snoRNA surrounding the B/C motif (3UBC). This association with the U3BC RNA is dependent on the binding of a protein called 15.5K to the box B/C motif. The association of the protein with the U3BC RNA was found to be also dependent on a conserved RNA structure that flanks the box B/C motif. Part of the small subunit (SSU) processome, composed of more than 70 proteins and the RNA chaperone small nucleolar RNA (snoRNA) U3. Acetylation at Lys-12 and Lys-25 by KAT2B/PCAF under stress impairs pre-rRNA processing. Deacetylation by SIRT7 enhances RRP9-binding to U3 snoRNA, which is a prerequisite for pre-rRNA processing.

The protein resides in the nucleus. It localises to the nucleolus. Its function is as follows. Component of a nucleolar small nuclear ribonucleoprotein particle (snoRNP) thought to participate in the processing and modification of pre-ribosomal RNA (pre-rRNA). Part of the small subunit (SSU) processome, first precursor of the small eukaryotic ribosomal subunit. During the assembly of the SSU processome in the nucleolus, many ribosome biogenesis factors, an RNA chaperone and ribosomal proteins associate with the nascent pre-rRNA and work in concert to generate RNA folding, modifications, rearrangements and cleavage as well as targeted degradation of pre-ribosomal RNA by the RNA exosome. The sequence is that of U3 small nucleolar RNA-interacting protein 2 from Homo sapiens (Human).